The primary structure comprises 246 residues: 3'(2'),5'-bisphosphate nucleotidase CysQ (246 aa).

Positions 64, 83, 85, 86, and 205 each coordinate Mg(2+). Residue Glu64 coordinates substrate. Residues 85–88 (LDGT) and Asp205 contribute to the substrate site.

The protein belongs to the inositol monophosphatase superfamily. CysQ family. The cofactor is Mg(2+).

Its subcellular location is the cell inner membrane. It carries out the reaction adenosine 3',5'-bisphosphate + H2O = AMP + phosphate. Functionally, converts adenosine-3',5'-bisphosphate (PAP) to AMP. The sequence is that of 3'(2'),5'-bisphosphate nucleotidase CysQ from Shigella flexneri.